Reading from the N-terminus, the 98-residue chain is uncharacterized protein (98 aa).

The span at 1 to 10 shows a compositional bias: basic residues; that stretch reads MARRRKPLHR. The disordered stretch occupies residues 1 to 21; sequence MARRRKPLHRQRPEPPSWALR.

This is an uncharacterized protein from Mycobacterium bovis (strain ATCC BAA-935 / AF2122/97).